Reading from the N-terminus, the 329-residue chain is MVRTKTWTLKKHFVGYPTNSDFELKTAELPPLKNGEVLLEALFLTVDPYMRVAAKRLKEGDTMMGQQVAKVVESKNVALPKGTIVLASPGWTTHSISDGKDLEKLLTEWPDTIPLSLALGTVGMPGLTAYFGLLEICGVKGGETVMVNAAAGAVGSVVGQIAKLKGCKVVGAVGSDEKVAYLQKLGFDVVFNYKTVESLEETLKKASPDGYDCYFDNVGGEFSNTVIGQMKKFGRIAICGAISTYNRTGPLPPGPPPEIVIYQELRMEAFVVYRWQGDARQKALKDLLKWVLEGKIQYKEYIIEGFENMPAAFMGMLKGDNLGKTIVKA.

Phosphothreonine is present on T18. Phosphoserine is present on S20. Residues 152–155, K178, Y193, N217, 239–245, 270–272, and N321 contribute to the NADP(+) site; these read GAVG, CGAISTY, and FVV. K178 carries the N6-(2-hydroxyisobutyryl)lysine; alternate modification. Residue K178 is modified to N6-acetyllysine; alternate.

Belongs to the NADP-dependent oxidoreductase L4BD family. As to quaternary structure, monomer or homodimer. In terms of tissue distribution, high expression in the kidney, liver, and intestine but not in leukocytes.

It is found in the cytoplasm. It catalyses the reaction 13,14-dihydro-15-oxo-prostaglandin E1 + NADP(+) = 15-oxoprostaglandin E1 + NADPH + H(+). The enzyme catalyses 13,14-dihydro-15-oxo-prostaglandin E2 + NADP(+) = 15-oxoprostaglandin E2 + NADPH + H(+). The catalysed reaction is 13,14-dihydro-15-oxo-prostaglandin F1alpha + NADP(+) = 15-oxoprostaglandin F1alpha + NADPH + H(+). It carries out the reaction 13,14-dihydro-15-oxo-PGF2alpha + NADP(+) = 15-oxoprostaglandin F2alpha + NADPH + H(+). It catalyses the reaction leukotriene B4 + NADP(+) = 12-oxo-leukotriene B4 + NADPH + H(+). The enzyme catalyses 20-hydroxy-leukotriene B4 + NADP(+) = 12-oxo-20-hydroxy-leukotriene B4 + NADPH + H(+). The catalysed reaction is 6-trans-leukotriene B4 + NADP(+) = 12-oxo-(5S)-hydroxy-(6E,8E,10E,14Z)-eicosatetraenoate + NADPH + H(+). It carries out the reaction (5S,12S)-dihydroxy-(6E,10E,12E,14Z)-eicosatetraenoate + NADP(+) = 12-oxo-(5S)-hydroxy-(6E,8E,10E,14Z)-eicosatetraenoate + NADPH + H(+). It catalyses the reaction an n-alkanal + NADP(+) = an alk-2-enal + NADPH + H(+). The enzyme catalyses hexanal + NADP(+) = (E)-hex-2-enal + NADPH + H(+). The catalysed reaction is octanal + NADP(+) = (2E)-octenal + NADPH + H(+). It carries out the reaction decanal + NADP(+) = (2E)-decenal + NADPH + H(+). It catalyses the reaction dodecanal + NADP(+) = (2E)-dodecenal + NADPH + H(+). The enzyme catalyses 4-hydroxynonanal + NADP(+) = (E)-4-hydroxynon-2-enal + NADPH + H(+). The catalysed reaction is pentan-2-one + NADP(+) = (E)-pent-3-en-2-one + NADPH + H(+). It carries out the reaction nonan-2-one + NADP(+) = (3E)-nonen-2-one + NADPH + H(+). Functionally, NAD(P)H-dependent oxidoreductase involved in metabolic inactivation of pro- and anti-inflammatory eicosanoids: prostaglandins (PG), leukotrienes (LT) and lipoxins (LX). Catalyzes with high efficiency the reduction of the 13,14 double bond of 15-oxoPGs, including 15-oxo-PGE1, 15-oxo-PGE2, 15-oxo-PGF1-alpha and 15-oxo-PGF2-alpha. Catalyzes with lower efficiency the oxidation of the hydroxyl group at C12 of LTB4 and its derivatives, converting them into biologically less active 12-oxo-LTB4 metabolites. Reduces 15-oxo-LXA4 to 13,14 dihydro-15-oxo-LXA4, enhancing neutrophil recruitment at the inflammatory site. May play a role in metabolic detoxification of alkenals and ketones. Reduces alpha,beta-unsaturated alkenals and ketones, particularly those with medium-chain length, showing highest affinity toward (2E)-decenal and (3E)-3-nonen-2-one. May inactivate 4-hydroxy-2-nonenal, a cytotoxic lipid constituent of oxidized low-density lipoprotein particles. In Homo sapiens (Human), this protein is Prostaglandin reductase 1 (PTGR1).